The primary structure comprises 353 residues: Protein Wnt-11b (353 aa).

Positions 1–22 (MAPTRHWVTPLLLLCCSGICGA) are cleaved as a signal peptide. N-linked (GlcNAc...) asparagine glycosylation is found at N31, N38, and N88. Disulfide bonds link C78-C89, C128-C136, C138-C155, C208-C222, and C210-C217. S214 is lipidated: O-palmitoleoyl serine; by PORCN. A sulfotyrosine mark is found at Y274 and Y281. Disulfide bonds link C282-C313, C298-C308, C312-C352, C328-C343, C330-C340, and C335-C336. An N-linked (GlcNAc...) asparagine glycan is attached at N299.

It belongs to the Wnt family. In terms of assembly, homodimer. Secreted homodimers form a complex with wnt5a homodimers; tyrosine sulfation of both wnt11 and wnt5a by tpst1 is required for this interaction. Interacts with the transmembrane receptor fzd7/fz7. Interacts with lrp6 and ryk. Interacts with tdgf1/frl1. Interacts weakly with frzb1 and strongly with frzb2/crescent. Interaction with frzb2/crescent antagonizes wnt11 function in the neuroectoderm, but enhances it in mesodermal tissue. Post-translationally, glycosylation is required for protein secretion. In terms of processing, palmitoleoylation is required for efficient binding to frizzled receptors. Depalmitoleoylation leads to Wnt signaling pathway inhibition. As to expression, transcripts are expressed ubiquitously in early oocytes but become vegetally localized during mid-oogenesis then enriched on the dorsal side by the 8 to 16 cell stage. The protein becomes asymmetrically concentrated on the dorsal side by the 64-cell stage. During gastrulation, expressed in the lateral and ventral marginal zone, and during tadpole stages in the somites and first branchial arch. Weakly expressed in the pronephros from at least stage 12.5, with kidney expression increasing until stage 35. Expressed in the prospective posterior gut between stages 13 and 20, and in the deep foregut endoderm. Prior to neural crest cell migration, expressed in a domain flanking the neural crest on the lateral or epidermal side (the opposite side to wnt11/wnt11-r).

The protein resides in the secreted. It is found in the extracellular space. It localises to the extracellular matrix. Ligand for the frizzled7 transmembrane receptor. Primarily acts via non-canonical Wnt pathways mediated by either Ca(2+) and PKC, or by JNK and dvl2/dsh. Depending on the cellular context, can also signal via the canonical Wnt pathway mediated by beta-catenin and dvl2/dsh. May also inhibit canonical Wnt signaling. Maternally initiates dorsal/ventral axis formation by a canonical route, which signals via lrp6. In a complex with wnt5a, activates the canonical and non-canonical processes involved in axis formation. In the non-canonical pathway, acts through fzd7/fz7 to induce phosphorylation of dvl2/dsh. Signals through a non-canonical Wnt pathway to regulate convergent extension movements during gastrulation. Interactions with the secreted Wnt antagonist sfrp5 to coordinate foregut development, acting via a non-canonical Wnt pathway whereby sfrp5 restricts wnt11b activity to prevent inappropriate foregut formation. Mediates cardiogenesis via non-canonical Wnt signaling involving JNK-activation and PKC. Acts redundantly with wnt11/wnt11r during pronephros induction. In Xenopus laevis (African clawed frog), this protein is Protein Wnt-11b (wnt11b).